The following is a 768-amino-acid chain: Ral guanine nucleotide dissociation stimulator-like 1 (768 aa).

One can recognise an N-terminal Ras-GEF domain in the interval 65–196 (KIRTIKAGTL…RAQNLLEQFQ (132 aa)). In terms of domain architecture, Ras-GEF spans 232 to 501 (SEDLVAEQLT…YALSCEIEAA (270 aa)). At S520 the chain carries Phosphoserine. The segment at 530 to 623 (PGSTPTKEQP…PPTCNNNPKI (94 aa)) is disordered. 2 stretches are compositionally biased toward low complexity: residues 541–561 (SAAS…SCES) and 586–596 (ESSSSCSSIHS). A compositionally biased stretch (polar residues) spans 597–621 (MDTNSSGMSSLINPLSSPPTCNNNP). The Ras-associating domain maps to 648–735 (DTCIIRISVE…FDFILRKKNS (88 aa)).

In terms of assembly, interacts with Ras.

Its function is as follows. Probable guanine nucleotide exchange factor. This is Ral guanine nucleotide dissociation stimulator-like 1 (Rgl1) from Mus musculus (Mouse).